The primary structure comprises 485 residues: Glutamyl-tRNA(Gln) amidotransferase subunit A (485 aa).

Active-site charge relay system residues include K79 and S154. S178 acts as the Acyl-ester intermediate in catalysis.

Belongs to the amidase family. GatA subfamily. Heterotrimer of A, B and C subunits.

It carries out the reaction L-glutamyl-tRNA(Gln) + L-glutamine + ATP + H2O = L-glutaminyl-tRNA(Gln) + L-glutamate + ADP + phosphate + H(+). In terms of biological role, allows the formation of correctly charged Gln-tRNA(Gln) through the transamidation of misacylated Glu-tRNA(Gln) in organisms which lack glutaminyl-tRNA synthetase. The reaction takes place in the presence of glutamine and ATP through an activated gamma-phospho-Glu-tRNA(Gln). The sequence is that of Glutamyl-tRNA(Gln) amidotransferase subunit A from Carboxydothermus hydrogenoformans (strain ATCC BAA-161 / DSM 6008 / Z-2901).